The primary structure comprises 277 residues: Large ribosomal subunit protein uL15c (277 aa).

The N-terminal 67 residues, 1–67 (MATPLSISSN…FARPLVVVSQ (67 aa)), are a transit peptide targeting the chloroplast. Thr68 is modified (N-acetylthreonine). Positions 81–125 (FRLDNLGPQPGSRKKQKRKGRGISAGQGASCGFGMRGQKSRSGPG) are disordered. Over residues 92-101 (SRKKQKRKGR) the composition is skewed to basic residues. Over residues 103–115 (ISAGQGASCGFGM) the composition is skewed to gly residues.

The protein belongs to the universal ribosomal protein uL15 family. As to quaternary structure, part of the 50S ribosomal subunit.

The protein localises to the plastid. The protein resides in the chloroplast. This Arabidopsis thaliana (Mouse-ear cress) protein is Large ribosomal subunit protein uL15c (RPL15).